Here is a 385-residue protein sequence, read N- to C-terminus: Beta-lactamase (385 aa).

An N-terminal signal peptide occupies residues 1-20; sequence MKRLLAFCLLFFAALGQAKV. The active-site Acyl-ester intermediate is the Ser84. The active-site Proton acceptor is Tyr170. Residue 335–337 participates in substrate binding; the sequence is KTG.

It belongs to the class-C beta-lactamase family.

The protein resides in the periplasm. The enzyme catalyses a beta-lactam + H2O = a substituted beta-amino acid. Functionally, this protein is a serine beta-lactamase with a substrate specificity for cephalosporins. This Lysobacter lactamgenus protein is Beta-lactamase.